Consider the following 278-residue polypeptide: HTH-type transcriptional regulator ExsA (278 aa).

In terms of domain architecture, HTH araC/xylS-type spans 171 to 269 (ERLQLFMEKH…GCTPSRSRQG (99 aa)). 2 consecutive DNA-binding regions (H-T-H motif) follow at residues 188 to 209 (SDFS…GSVY) and 236 to 259 (IVDI…RRRF).

Homodimer. Interacts with ExsD; this interaction inhibits ExsA activity.

Its activity is regulated as follows. In the absence of inducing signals such as low Ca(2+) or host cell contact, the T3SS/injectisome is expressed at a low basal level and exists in a quiescent state due to ExsA sequestration by ExsD in a 1:1 complex. Upon host cell contact, this interaction is disrupted by the anti-antiactivator protein ExsC leading to ExsA activation. Its function is as follows. Transcriptional regulator that plays an essential role in the activation the type III secretion system (T3SS) operons. In addition, ExsA directly regulates the transcription of ImpA virulence factor that cooperatively inhibits the functions of host macrophages together with the T3SS. This is HTH-type transcriptional regulator ExsA (exsA) from Pseudomonas aeruginosa (strain ATCC 15692 / DSM 22644 / CIP 104116 / JCM 14847 / LMG 12228 / 1C / PRS 101 / PAO1).